A 931-amino-acid polypeptide reads, in one-letter code: Beta-mannosidase A (931 aa).

An N-terminal signal peptide occupies residues 1–21 (MRHSIGLAAALLAPTLPVALG). 7 N-linked (GlcNAc...) asparagine glycosylation sites follow: Asn40, Asn79, Asn247, Asn282, Asn316, Asn326, and Asn347. Glu479 acts as the Proton donor in catalysis. N-linked (GlcNAc...) asparagine glycans are attached at residues Asn550, Asn608, Asn658, Asn738, Asn790, Asn798, Asn830, and Asn918.

It belongs to the glycosyl hydrolase 2 family. Beta-mannosidase A subfamily. Homodimer.

It is found in the secreted. The enzyme catalyses Hydrolysis of terminal, non-reducing beta-D-mannose residues in beta-D-mannosides.. Its pathway is glycan metabolism; N-glycan degradation. Exoglycosidase that cleaves the single beta-linked mannose residue from the non-reducing end of beta-mannosidic oligosaccharides of various complexity and length. Involved in the degradation of polymeric mannan and galactomannan. In Aspergillus niger (strain ATCC MYA-4892 / CBS 513.88 / FGSC A1513), this protein is Beta-mannosidase A (mndA).